The sequence spans 261 residues: GTP cyclohydrolase FolE2 (261 aa).

It belongs to the GTP cyclohydrolase IV family.

The enzyme catalyses GTP + H2O = 7,8-dihydroneopterin 3'-triphosphate + formate + H(+). It participates in cofactor biosynthesis; 7,8-dihydroneopterin triphosphate biosynthesis; 7,8-dihydroneopterin triphosphate from GTP: step 1/1. Its function is as follows. Converts GTP to 7,8-dihydroneopterin triphosphate. This is GTP cyclohydrolase FolE2 from Geobacter metallireducens (strain ATCC 53774 / DSM 7210 / GS-15).